The primary structure comprises 72 residues: DNA-directed RNA polymerase subunit epsilon (72 aa).

The protein belongs to the RNA polymerase subunit epsilon family. As to quaternary structure, RNAP is composed of a core of 2 alpha, a beta and a beta' subunit. The core is associated with a delta subunit, and at least one of epsilon or omega. When a sigma factor is associated with the core the holoenzyme is formed, which can initiate transcription.

The enzyme catalyses RNA(n) + a ribonucleoside 5'-triphosphate = RNA(n+1) + diphosphate. A non-essential component of RNA polymerase (RNAP). The sequence is that of DNA-directed RNA polymerase subunit epsilon from Lactiplantibacillus plantarum (strain ATCC BAA-793 / NCIMB 8826 / WCFS1) (Lactobacillus plantarum).